We begin with the raw amino-acid sequence, 462 residues long: Cell wall mannoprotein 1 (462 aa).

A signal peptide spans 1-18; the sequence is MKFLSSLVVLGLSAQALA. Ser313 contacts hexadecanoate. Residues 346–429 are disordered; sequence FAGTGPAPTT…SVPAAPTGGN (84 aa). Residues 347–366 are compositionally biased toward low complexity; sequence AGTGPAPTTSSTPEASTAPA. Residues 399 to 420 show a composition bias toward polar residues; that stretch reads VWPTSTTASPDVQPTITSSGTS.

It belongs to the cell wall mannoprotein 1 family. As to quaternary structure, monomer. Mannoprotein, glycosylated.

It is found in the secreted. Its subcellular location is the cell wall. In terms of biological role, constitutive protein of the cell wall. Binds fatty acids and may thus serve as a fatty acid transporter between P.marneffei and host cells during infection. Abundant antigen target of host humoral immune response. The polypeptide is Cell wall mannoprotein 1 (Talaromyces marneffei (Penicillium marneffei)).